Here is a 356-residue protein sequence, read N- to C-terminus: HORMA domain-containing protein 1 (356 aa).

The 202-residue stretch at 24-225 (QQSLVLVKKL…TPFHSIKMNV (202 aa)) folds into the HORMA domain. Disordered stretches follow at residues 282–305 (ETQE…PKMD) and 333–356 (QLEF…SVPK). Basic and acidic residues predominate over residues 288 to 298 (EQPHRHTKEDF). The span at 347 to 356 (PKRRKVSVPK) shows a compositional bias: basic residues.

The protein resides in the nucleus. It is found in the chromosome. Plays a key role in meiotic progression by ensuring that sufficient numbers of processed DNA double-strand breaks (DSBs) are available for successful homology search, promoting synaptonemal-complex formation independently and playing key role in the male mid-pachytene checkpoint and the female meiotic prophase checkpoint. The polypeptide is HORMA domain-containing protein 1 (hormad1) (Danio rerio (Zebrafish)).